We begin with the raw amino-acid sequence, 520 residues long: GMP synthase [glutamine-hydrolyzing] (520 aa).

The 194-residue stretch at 9 to 202 (KILILDFGSQ…VRAICGCTGH (194 aa)) folds into the Glutamine amidotransferase type-1 domain. Residue cysteine 86 is the Nucleophile of the active site. Residues histidine 176 and glutamate 178 contribute to the active site. The region spanning 203 to 395 (WTPGQIIEDA…LGLPHQMVWR (193 aa)) is the GMPS ATP-PPase domain. 230-236 (SGGVDSS) is a binding site for ATP.

Homodimer.

The enzyme catalyses XMP + L-glutamine + ATP + H2O = GMP + L-glutamate + AMP + diphosphate + 2 H(+). It participates in purine metabolism; GMP biosynthesis; GMP from XMP (L-Gln route): step 1/1. Functionally, catalyzes the synthesis of GMP from XMP. In Pelobacter propionicus (strain DSM 2379 / NBRC 103807 / OttBd1), this protein is GMP synthase [glutamine-hydrolyzing].